Reading from the N-terminus, the 379-residue chain is Acyl-CoA dehydrogenase (379 aa).

It belongs to the acyl-CoA dehydrogenase family. It depends on FAD as a cofactor.

The enzyme catalyses a 2,3-saturated acyl-CoA + A = a 2,3-dehydroacyl-CoA + AH2. The protein is Acyl-CoA dehydrogenase (mmgC) of Bacillus subtilis (strain 168).